The sequence spans 244 residues: Small ribosomal subunit protein eS4 (244 aa).

Residues 43–106 form the S4 RNA-binding domain; it reads LPLLLVVRDV…DENYLVLFDE (64 aa).

This sequence belongs to the eukaryotic ribosomal protein eS4 family.

The chain is Small ribosomal subunit protein eS4 from Methanococcus maripaludis (strain C7 / ATCC BAA-1331).